We begin with the raw amino-acid sequence, 208 residues long: Small ribosomal subunit protein uS4 (208 aa).

Residues 98 to 161 enclose the S4 RNA-binding domain; the sequence is QRLDNVVYRM…KNNPQIVRAI (64 aa).

It belongs to the universal ribosomal protein uS4 family. As to quaternary structure, part of the 30S ribosomal subunit. Contacts protein S5. The interaction surface between S4 and S5 is involved in control of translational fidelity.

In terms of biological role, one of the primary rRNA binding proteins, it binds directly to 16S rRNA where it nucleates assembly of the body of the 30S subunit. Functionally, with S5 and S12 plays an important role in translational accuracy. The chain is Small ribosomal subunit protein uS4 from Campylobacter concisus (strain 13826).